Reading from the N-terminus, the 458-residue chain is MKPTETLQEKGKLFLVVMMPILITQIGLYAMNFFDTVMSGQAGANDLAGVAIGSSLWVPVFTGLNGVLLALTPIIAQSIGAEKRDDVPYVFLQGLYLSIAISIAVILIGAVVLDPILSAMSLEDEVGRIAKEYLIGLAFGIVPLFIYTTIRCLIDSLGETRVTMFITLLSLPINIFFNYVLIFGKLGFPRLGGVGAGYASAITYWFILAVAIVVVVKVRPFTDFQLFKKLYHVSLKKWKEILLLGLPIGFTIFFETSIFAAVTLLMSTFDTATIAAHQAAVNFASFLYMIPLSIAFTLTIAVGYEVGAKRVEDARQYSRLGITFALIMGLVAGVIIYVLRAPVASLYTNDSQVAWLIQQFLIYSIFFQLSDALATPIQGVLRGHKDVNVPFVMALVSFWIIGLPTGYLLANFSPLGPYGYWIGLITGLASCAIALSWRLKQMQRKFERAARLSQNGNS.

12 helical membrane passes run 14–34 (FLVV…MNFF), 56–76 (LWVP…PIIA), 97–117 (LSIA…DPIL), 134–154 (LIGL…RCLI), 164–184 (MFIT…LIFG), 196–216 (AGYA…VVVV), 241–261 (ILLL…IFAA), 283–303 (FASF…IAVG), 320–340 (LGIT…YVLR), 353–373 (VAWL…SDAL), 389–409 (VPFV…GYLL), and 415–435 (LGPY…AIAL).

This sequence belongs to the multi antimicrobial extrusion (MATE) (TC 2.A.66.1) family.

The protein resides in the cell membrane. Its function is as follows. Multidrug efflux pump. In Halalkalibacterium halodurans (strain ATCC BAA-125 / DSM 18197 / FERM 7344 / JCM 9153 / C-125) (Bacillus halodurans), this protein is Probable multidrug resistance protein NorM (norM).